A 432-amino-acid chain; its full sequence is 3-phosphoshikimate 1-carboxyvinyltransferase (432 aa).

3-phosphoshikimate is bound by residues Lys-23, Ser-24, and Arg-28. Lys-23 serves as a coordination point for phosphoenolpyruvate. Residues Gly-95 and Arg-123 each coordinate phosphoenolpyruvate. Ser-167, Gln-169, Asp-317, and Lys-344 together coordinate 3-phosphoshikimate. Gln-169 lines the phosphoenolpyruvate pocket. Residue Asp-317 is the Proton acceptor of the active site. The phosphoenolpyruvate site is built by Arg-348 and Arg-390.

It belongs to the EPSP synthase family. Monomer.

The protein resides in the cytoplasm. It catalyses the reaction 3-phosphoshikimate + phosphoenolpyruvate = 5-O-(1-carboxyvinyl)-3-phosphoshikimate + phosphate. Its pathway is metabolic intermediate biosynthesis; chorismate biosynthesis; chorismate from D-erythrose 4-phosphate and phosphoenolpyruvate: step 6/7. Its function is as follows. Catalyzes the transfer of the enolpyruvyl moiety of phosphoenolpyruvate (PEP) to the 5-hydroxyl of shikimate-3-phosphate (S3P) to produce enolpyruvyl shikimate-3-phosphate and inorganic phosphate. The sequence is that of 3-phosphoshikimate 1-carboxyvinyltransferase from Staphylococcus aureus (strain bovine RF122 / ET3-1).